Reading from the N-terminus, the 2789-residue chain is Multiple epidermal growth factor-like domains protein 8 (2789 aa).

The signal sequence occupies residues 1-27 (MALGGALALALALALAVLGPLSLRVLA). Residues 28–2591 (GDCKGQRQVL…FFRQDQAHID (2564 aa)) are Extracellular-facing. 6 disulfides stabilise this stretch: Cys30/Cys57, Cys142/Cys152, Cys146/Cys158, Cys174/Cys184, Cys178/Cys191, and Cys193/Cys202. In terms of domain architecture, CUB 1 spans 30–140 (CKGQRQVLRE…LGFNASFRFS (111 aa)). Asn50 is a glycosylation site (N-linked (GlcNAc...) asparagine). 2 consecutive EGF-like domains span residues 138–168 (RFSL…GGPD) and 170–203 (GLQE…RACD). Kelch repeat units follow at residues 241-287 (LLAV…AVAW), 290-338 (LLVL…AGHA), 346-399 (WLYV…FHAP), 402-453 (TLLV…FHTA), 459-511 (YMVV…APPS), and 525-575 (VLLV…SRDP). PSI domains lie at 561 to 613 (YCSM…SDCQ), 847 to 899 (ACTS…ALCP), and 900 to 947 (LCEE…EECP). Asn1048 carries an N-linked (GlcNAc...) asparagine glycan. In terms of domain architecture, EGF-like 3; calcium-binding spans 1074 to 1115 (DVDECRLGLARCHPRATCLNTPLSYECHCQRGYQGDGITHCN). Cystine bridges form between Cys1078–Cys1091, Cys1085–Cys1100, Cys1102–Cys1114, Cys1163–Cys1171, Cys1165–Cys1179, Cys1182–Cys1191, Cys1194–Cys1208, Cys1211–Cys1224, Cys1213–Cys1231, Cys1233–Cys1242, Cys1245–Cys1259, Cys1263–Cys1302, Cys1336–Cys1367, Cys1407–Cys1421, Cys1415–Cys1433, and Cys1435–Cys1444. 2 consecutive Laminin EGF-like domains span residues 1163-1210 (CGCS…GCRP) and 1211-1261 (CQCN…SCFR). A glycan (N-linked (GlcNAc...) asparagine) is linked at Asn1226. One can recognise a CUB 2 domain in the interval 1263–1405 (CGGRALLTNV…WGFNASVGSA (143 aa)). N-linked (GlcNAc...) asparagine glycosylation occurs at Asn1271. A Phosphothreonine modification is found at Thr1353. Residues 1403 to 1445 (GSARCGSGGPGSCPVPQECVPQDGAAGAGLCRCPQGWAGPHCR) enclose the EGF-like 4 domain. Kelch repeat units lie at residues 1522–1570 (TLWM…SFHA), 1580–1629 (AMYL…TARR), 1632–1679 (SLLL…SAVY), 1685–1735 (SLYV…HASA), 1740–1787 (TMVV…ESVA), and 1796–1841 (RLYI…WCHG). 4 PSI domains span residues 1820–1860 (PCRL…PPCS), 1868–1923 (ECRR…NDCR), 2004–2062 (PCHL…ESCS), and 2064–2121 (GCAQ…LSCP). Asn2010 carries an N-linked (GlcNAc...) asparagine glycan. Residues 2122–2160 (PEDECANGHHDCNETQNCHDQPHGYECSCKTGYTMDNVT) form the EGF-like 5 domain. Disulfide bonds link Cys2126/Cys2139 and Cys2133/Cys2148. 2 N-linked (GlcNAc...) asparagine glycosylation sites follow: Asn2158 and Asn2173. Disulfide bonds link Cys2197-Cys2205, Cys2199-Cys2214, Cys2217-Cys2226, Cys2229-Cys2243, Cys2324-Cys2333, Cys2326-Cys2341, Cys2343-Cys2368, and Cys2371-Cys2385. Laminin EGF-like domains lie at 2197–2245 (CRCN…TCRP) and 2324–2387 (CQCN…QCYR). A disordered region spans residues 2468–2508 (VHIQPPPPPPPPPPPADGVPRVAADLGGLGTGSGSGSPVEP). Residues 2471–2484 (QPPPPPPPPPPPAD) show a composition bias toward pro residues. Residues 2592–2612 (LFVFFSVFFSCFFLFLSLCVL) form a helical membrane-spanning segment. The Cytoplasmic segment spans residues 2613–2789 (LWKAKQALDQ…SQDNLTSMSL (177 aa)). The segment covering 2762–2776 (GGAGGSGHGGGGGRK) has biased composition (gly residues). Positions 2762-2789 (GGAGGSGHGGGGGRKGLLSQDNLTSMSL) are disordered. A compositionally biased stretch (polar residues) spans 2780 to 2789 (SQDNLTSMSL).

As to expression, highest expression in brain, testis and kidney.

It is found in the membrane. Its function is as follows. Acts as a negative regulator of hedgehog signaling. This chain is Multiple epidermal growth factor-like domains protein 8 (Megf8), found in Mus musculus (Mouse).